The following is a 1506-amino-acid chain: DDB1- and CUL4-associated factor 1 (1506 aa).

The interval 141–499 (QPLRTYSTGL…STLEILNLED (359 aa)) is protein kinase-like. A phosphoserine mark is found at serine 202 and serine 254. Residues 241–275 (RLDSSHKTSSRVNSATKPEEGGLKKNKSAKHGDRE) form a disordered region. One can recognise a Chromo domain in the interval 561-592 (SYTHEQIVEMMEFLIEYGPAQLYWEPAEVFLK). An N6-acetyllysine modification is found at lysine 700. The residue at position 827 (serine 827) is a Phosphoserine. In terms of domain architecture, LisH spans 845–877 (PEKELLLLIRNHLISKGLGETATVLTREADLPM). The residue at position 887 (threonine 887) is a Phosphothreonine. Residues serine 894 and serine 897 each carry the phosphoserine modification. Disordered regions lie at residues 916–946 (ATVG…GPSY) and 977–999 (KSDH…HLPS). Pro residues predominate over residues 924-943 (SAPPAHPPPRPPQGSLPLPG). Phosphoserine is present on residues serine 978 and serine 999. WD repeat units lie at residues 1090 to 1129 (EDES…EEAS), 1132 to 1173 (CHNS…DMKH), 1175 to 1212 (FTED…KLLT), 1214 to 1246 (FNPD…WDVR), and 1247 to 1289 (SAQA…LLHT). Residues 1090-1289 (EDESGFTCCA…DLRTFHLLHT (200 aa)) are WD repeat-like region. Short sequence motifs (DWD box) lie at residues 1241–1248 (VLWDVRSA) and 1277–1284 (EIWDLRTF). Residue serine 1327 is modified to Phosphoserine. The tract at residues 1392–1506 (RLAEDEDEEE…EDDIILSLNE (115 aa)) is disordered. 2 stretches are compositionally biased toward acidic residues: residues 1395 to 1482 (EDED…EEVE) and 1489 to 1500 (DSSDNSDLEDDI). The interval 1417–1506 (DDDTDDLDEL…EDDIILSLNE (90 aa)) is interaction with NF2.

This sequence belongs to the VPRBP/DCAF1 family. As to quaternary structure, component of the DCX (DDB1-CUL4-X-box) E3 ubiquitin-protein ligase complex, named CUL4A-RBX1-DDB1-DCAF1/VPRBP complex. Interacts with DDB1; the interaction is direct. Also forms a ternary complex with DDA1 and DDB1. Interacts with NF2 (via FERM domain). Component of the EDVP complex, a E3 ligase complex containing DYRK2, EDD/UBR5, DDB1 and DCAF1. Interacts with DYRK2; the interaction is direct. Interacts with RAG1; the interaction is direct. Interacts with LLGL1 and LLGL2. Interacts with histone H3. Interacts with ESR1 and LATS1; probably recruited by LATS1 to promote ESR1 ubiquitination and ubiquitin-mediated proteasomal degradation. Directly interacts with TET1, TET2 and TET3 (via C-terminus). Interacts with CEP78; promoting DCAF1 localization to centrosomes. In terms of tissue distribution, widely expressed. Expressed in oocytes and zygotes (at protein level).

The protein resides in the cytoplasm. It is found in the nucleus. Its subcellular location is the cytoskeleton. The protein localises to the microtubule organizing center. It localises to the centrosome. The enzyme catalyses L-seryl-[protein] + ATP = O-phospho-L-seryl-[protein] + ADP + H(+). The catalysed reaction is L-threonyl-[protein] + ATP = O-phospho-L-threonyl-[protein] + ADP + H(+). It functions in the pathway protein modification; protein ubiquitination. Acts both as a substrate recognition component of E3 ubiquitin-protein ligase complexes and as an atypical serine/threonine-protein kinase, playing key roles in various processes such as cell cycle, telomerase regulation and histone modification. Probable substrate-specific adapter of a DCX (DDB1-CUL4-X-box) E3 ubiquitin-protein ligase complex, named CUL4A-RBX1-DDB1-DCAF1/VPRBP complex, which mediates ubiquitination and proteasome-dependent degradation of proteins such as NF2. Involved in the turnover of methylated proteins: recognizes and binds methylated proteins via its chromo domain, leading to ubiquitination of target proteins by the RBX1-DDB1-DCAF1/VPRBP complex. The CUL4A-RBX1-DDB1-DCAF1/VPRBP complex is also involved in B-cell development: DCAF1 is recruited by RAG1 to ubiquitinate proteins, leading to limit error-prone repair during V(D)J recombination. Also part of the EDVP complex, an E3 ligase complex that mediates ubiquitination of proteins such as TERT, leading to TERT degradation and telomerase inhibition. The EDVP complex also mediates ubiquitination and degradation of CCP110. Also acts as an atypical serine/threonine-protein kinase that specifically mediates phosphorylation of 'Thr-120' of histone H2A (H2AT120ph) in a nucleosomal context, thereby repressing transcription. H2AT120ph is present in the regulatory region of many tumor suppresor genes, down-regulates their transcription and is present at high level in a number of tumors. Involved in JNK-mediated apoptosis during cell competition process via its interaction with LLGL1 and LLGL2. By acting on TET dioxygenses, essential for oocyte maintenance at the primordial follicle stage, hence essential for female fertility. This chain is DDB1- and CUL4-associated factor 1, found in Mus musculus (Mouse).